Reading from the N-terminus, the 173-residue chain is Crossover junction endodeoxyribonuclease RuvC (173 aa).

Active-site residues include Asp8, Glu67, and Asp139. Mg(2+) contacts are provided by Asp8, Glu67, and Asp139.

This sequence belongs to the RuvC family. Homodimer which binds Holliday junction (HJ) DNA. The HJ becomes 2-fold symmetrical on binding to RuvC with unstacked arms; it has a different conformation from HJ DNA in complex with RuvA. In the full resolvosome a probable DNA-RuvA(4)-RuvB(12)-RuvC(2) complex forms which resolves the HJ. The cofactor is Mg(2+).

The protein localises to the cytoplasm. The catalysed reaction is Endonucleolytic cleavage at a junction such as a reciprocal single-stranded crossover between two homologous DNA duplexes (Holliday junction).. Functionally, the RuvA-RuvB-RuvC complex processes Holliday junction (HJ) DNA during genetic recombination and DNA repair. Endonuclease that resolves HJ intermediates. Cleaves cruciform DNA by making single-stranded nicks across the HJ at symmetrical positions within the homologous arms, yielding a 5'-phosphate and a 3'-hydroxyl group; requires a central core of homology in the junction. The consensus cleavage sequence is 5'-(A/T)TT(C/G)-3'. Cleavage occurs on the 3'-side of the TT dinucleotide at the point of strand exchange. HJ branch migration catalyzed by RuvA-RuvB allows RuvC to scan DNA until it finds its consensus sequence, where it cleaves and resolves the cruciform DNA. The polypeptide is Crossover junction endodeoxyribonuclease RuvC (Pectobacterium carotovorum subsp. carotovorum (strain PC1)).